Reading from the N-terminus, the 198-residue chain is Imidazoleglycerol-phosphate dehydratase (198 aa).

It belongs to the imidazoleglycerol-phosphate dehydratase family.

The protein resides in the cytoplasm. It carries out the reaction D-erythro-1-(imidazol-4-yl)glycerol 3-phosphate = 3-(imidazol-4-yl)-2-oxopropyl phosphate + H2O. The protein operates within amino-acid biosynthesis; L-histidine biosynthesis; L-histidine from 5-phospho-alpha-D-ribose 1-diphosphate: step 6/9. In Nitratidesulfovibrio vulgaris (strain DP4) (Desulfovibrio vulgaris), this protein is Imidazoleglycerol-phosphate dehydratase.